A 106-amino-acid chain; its full sequence is Acidic phospholipase A2 PhTX-III (106 aa).

Ca(2+) contacts are provided by Y23, G25, and G27. 5 disulfides stabilise this stretch: C24-C40, C39-C75, C45-C106, C46-C68, and C55-C66. H43 is an active-site residue. D44 is a Ca(2+) binding site. The active site involves D69.

Ca(2+) is required as a cofactor. In terms of tissue distribution, expressed by the venom gland.

It is found in the secreted. The catalysed reaction is a 1,2-diacyl-sn-glycero-3-phosphocholine + H2O = a 1-acyl-sn-glycero-3-phosphocholine + a fatty acid + H(+). Partially inhibited by magnesium ions and completely inhibited by zinc ions These divalent cations may act as competitive antagonists of the cofactor. Functionally, snake venom phospholipase A2 (PLA2) that induces inflammatory response, with local edema and release of cytokines IL-1 alpha, IL-6 and TNF-alpha. Does not exhibit myotoxic, anticoagulant and antibacterial effects. Release of pro-inflammatory cytokines may be due to mast cell degranulation, and edema may be induced by arachidonic acid that results from the PLA2 catalytic activity. PLA2 catalyzes the calcium-dependent hydrolysis of the 2-acyl groups in 3-sn-phosphoglycerides. In Bothrocophias hyoprora (Amazonian hognose viper), this protein is Acidic phospholipase A2 PhTX-III.